Reading from the N-terminus, the 147-residue chain is Lectin-like protein BA14k (147 aa).

An N-terminal signal peptide occupies residues 1–26; it reads MNSFRKTCAGALALIFGATSIVPTVA. Residues 80 to 100 traverse the membrane as a helical segment; sequence GWWYPLAAFGAGAIIGGAISQ.

The protein belongs to the BA14k family.

Its subcellular location is the cell membrane. In terms of biological role, has immunoglobulin-binding and hemagglutination properties, and can bind to mannose. Essential for virulence. May be involved in LPS biosynthesis or polysaccharide transport. The polypeptide is Lectin-like protein BA14k (Brucella abortus (strain S19)).